Consider the following 227-residue polypeptide: Homeobox-leucine zipper protein ATHB-54 (227 aa).

Residues 65-124 (EITKKRKLTPIQLRLLEESFEEEKRLEPDRKLWLAEKLGLQPSQVAVWFQNRRARYKTKQ) constitute a DNA-binding region (homeobox). Positions 125–153 (LEHDCDSLKASYAKLKTDWDILFVQNQTL) are leucine-zipper. A disordered region spans residues 175-198 (IERKRLGEEGSSVKSDNTQYSEEE).

Belongs to the HD-ZIP homeobox family. Class I subfamily. In terms of tissue distribution, predominantly expressed in flowers and siliques.

It localises to the nucleus. Its function is as follows. Probable transcription factor. In Arabidopsis thaliana (Mouse-ear cress), this protein is Homeobox-leucine zipper protein ATHB-54 (ATHB-54).